We begin with the raw amino-acid sequence, 74 residues long: MPFKIIASQCTSCSACEPLCPNVAISEKGGNFVIEAAKCSECVGHFDEPQCAAACPVDNTCVVDRALPRYQAPV.

The region spanning 2–30 (PFKIIASQCTSCSACEPLCPNVAISEKGG) is the 4Fe-4S ferredoxin-type domain. [4Fe-4S] cluster contacts are provided by C10, C13, C16, C20, C39, C51, and C55.

The cofactor is [4Fe-4S] cluster.

In Bradyrhizobium diazoefficiens (strain JCM 10833 / BCRC 13528 / IAM 13628 / NBRC 14792 / USDA 110), this protein is Ferredoxin-like protein in nif region (frxA).